The following is a 670-amino-acid chain: UvrABC system protein B (670 aa).

The Helicase ATP-binding domain maps to 28-414; it reads NNFKQGLQEQ…KKIPIVEQII (387 aa). 41-48 is an ATP binding site; that stretch reads GATGTGKT. Positions 94 to 117 match the Beta-hairpin motif; that stretch reads YYDYYQPEAYVASSDTYIEKDSKI. In terms of domain architecture, Helicase C-terminal spans 432–594; the sequence is QMDDLYFEIK…VTPTALNKTI (163 aa). Positions 631–666 constitute a UVR domain; the sequence is NKEIKRLQKMMKEAAKTLDFEKAATLRDLILELEKK.

This sequence belongs to the UvrB family. As to quaternary structure, forms a heterotetramer with UvrA during the search for lesions. Interacts with UvrC in an incision complex.

The protein resides in the cytoplasm. Functionally, the UvrABC repair system catalyzes the recognition and processing of DNA lesions. A damage recognition complex composed of 2 UvrA and 2 UvrB subunits scans DNA for abnormalities. Upon binding of the UvrA(2)B(2) complex to a putative damaged site, the DNA wraps around one UvrB monomer. DNA wrap is dependent on ATP binding by UvrB and probably causes local melting of the DNA helix, facilitating insertion of UvrB beta-hairpin between the DNA strands. Then UvrB probes one DNA strand for the presence of a lesion. If a lesion is found the UvrA subunits dissociate and the UvrB-DNA preincision complex is formed. This complex is subsequently bound by UvrC and the second UvrB is released. If no lesion is found, the DNA wraps around the other UvrB subunit that will check the other stand for damage. This chain is UvrABC system protein B, found in Onion yellows phytoplasma (strain OY-M).